Here is a 139-residue protein sequence, read N- to C-terminus: uncharacterized protein (139 aa).

The HIT domain maps to 5–114 (IFCKIINKEL…IPRFKNDGFG (110 aa)). Residues 99-103 (HTHFH) carry the Histidine triad motif motif.

This is an uncharacterized protein from Borreliella burgdorferi (strain ATCC 35210 / DSM 4680 / CIP 102532 / B31) (Borrelia burgdorferi).